The sequence spans 144 residues: 6,7-dimethyl-8-ribityllumazine synthase (144 aa).

5-amino-6-(D-ribitylamino)uracil is bound by residues Phe-21, 56-58 (AYE), and 80-82 (AVI). 85–86 (GT) provides a ligand contact to (2S)-2-hydroxy-3-oxobutyl phosphate. The Proton donor role is filled by His-88. A 5-amino-6-(D-ribitylamino)uracil-binding site is contributed by Phe-113. Position 127 (Arg-127) interacts with (2S)-2-hydroxy-3-oxobutyl phosphate.

Belongs to the DMRL synthase family. As to quaternary structure, forms an icosahedral capsid composed of 60 subunits, arranged as a dodecamer of pentamers.

It catalyses the reaction (2S)-2-hydroxy-3-oxobutyl phosphate + 5-amino-6-(D-ribitylamino)uracil = 6,7-dimethyl-8-(1-D-ribityl)lumazine + phosphate + 2 H2O + H(+). Its pathway is cofactor biosynthesis; riboflavin biosynthesis; riboflavin from 2-hydroxy-3-oxobutyl phosphate and 5-amino-6-(D-ribitylamino)uracil: step 1/2. In terms of biological role, catalyzes the formation of 6,7-dimethyl-8-ribityllumazine by condensation of 5-amino-6-(D-ribitylamino)uracil with 3,4-dihydroxy-2-butanone 4-phosphate. This is the penultimate step in the biosynthesis of riboflavin. The protein is 6,7-dimethyl-8-ribityllumazine synthase (ribH) of Photobacterium leiognathi.